The following is a 472-amino-acid chain: Aspartyl/glutamyl-tRNA(Asn/Gln) amidotransferase subunit B (472 aa).

Belongs to the GatB/GatE family. GatB subfamily. In terms of assembly, heterotrimer of A, B and C subunits.

The catalysed reaction is L-glutamyl-tRNA(Gln) + L-glutamine + ATP + H2O = L-glutaminyl-tRNA(Gln) + L-glutamate + ADP + phosphate + H(+). The enzyme catalyses L-aspartyl-tRNA(Asn) + L-glutamine + ATP + H2O = L-asparaginyl-tRNA(Asn) + L-glutamate + ADP + phosphate + 2 H(+). Its function is as follows. Allows the formation of correctly charged Asn-tRNA(Asn) or Gln-tRNA(Gln) through the transamidation of misacylated Asp-tRNA(Asn) or Glu-tRNA(Gln) in organisms which lack either or both of asparaginyl-tRNA or glutaminyl-tRNA synthetases. The reaction takes place in the presence of glutamine and ATP through an activated phospho-Asp-tRNA(Asn) or phospho-Glu-tRNA(Gln). This is Aspartyl/glutamyl-tRNA(Asn/Gln) amidotransferase subunit B from Campylobacter jejuni subsp. jejuni serotype O:6 (strain 81116 / NCTC 11828).